Reading from the N-terminus, the 168-residue chain is Aphid transmission protein (168 aa).

This sequence belongs to the caulimoviridae ORF II family.

Functionally, this protein is involved in virus transmission. This is Aphid transmission protein from Carnation etched ring virus (CERV).